We begin with the raw amino-acid sequence, 552 residues long: Putative E3 ubiquitin-protein ligase ARI6 (552 aa).

Residues Arg129–Glu343 are TRIAD supradomain. Residues Cys133, Cys136, Cys150, His152, Cys155, Cys158, Cys178, Cys183, Cys222, Cys227, Cys245, Cys247, Cys252, Cys255, His260, Cys265, Cys292, and Cys295 each coordinate Zn(2+). The segment at Cys133–Cys183 adopts an RING-type 1 zinc-finger fold. Residues Glu202–Cys265 form an IBR-type zinc finger. Residues Cys292–Cys322 form an RING-type 2; atypical zinc finger. Cys305 is a catalytic residue. 6 residues coordinate Zn(2+): Cys310, Cys314, Cys319, Cys322, His329, and Cys339. Positions His518–Thr552 are disordered. The segment covering Ala519–Lys534 has biased composition (polar residues).

The protein belongs to the RBR family. Ariadne subfamily. Requires Zn(2+) as cofactor.

The enzyme catalyses [E2 ubiquitin-conjugating enzyme]-S-ubiquitinyl-L-cysteine + [acceptor protein]-L-lysine = [E2 ubiquitin-conjugating enzyme]-L-cysteine + [acceptor protein]-N(6)-ubiquitinyl-L-lysine.. Its pathway is protein modification; protein ubiquitination. Its function is as follows. Might act as an E3 ubiquitin-protein ligase, or as part of E3 complex, which accepts ubiquitin from specific E2 ubiquitin-conjugating enzymes and then transfers it to substrates. In Arabidopsis thaliana (Mouse-ear cress), this protein is Putative E3 ubiquitin-protein ligase ARI6 (ARI6).